The primary structure comprises 555 residues: Oxygen-dependent choline dehydrogenase (555 aa).

Residue 4-33 participates in FAD binding; it reads DYIIIGAGSAGNVLATRLTEDPDVTVLLLE. H473 (proton acceptor) is an active-site residue.

This sequence belongs to the GMC oxidoreductase family. It depends on FAD as a cofactor.

It catalyses the reaction choline + A = betaine aldehyde + AH2. It carries out the reaction betaine aldehyde + NAD(+) + H2O = glycine betaine + NADH + 2 H(+). It functions in the pathway amine and polyamine biosynthesis; betaine biosynthesis via choline pathway; betaine aldehyde from choline (cytochrome c reductase route): step 1/1. Its function is as follows. Involved in the biosynthesis of the osmoprotectant glycine betaine. Catalyzes the oxidation of choline to betaine aldehyde and betaine aldehyde to glycine betaine at the same rate. In Proteus mirabilis (strain HI4320), this protein is Oxygen-dependent choline dehydrogenase.